A 74-amino-acid polypeptide reads, in one-letter code: Putative membrane protein insertion efficiency factor (74 aa).

The protein belongs to the UPF0161 family.

It is found in the cell inner membrane. Functionally, could be involved in insertion of integral membrane proteins into the membrane. The chain is Putative membrane protein insertion efficiency factor from Endomicrobium trichonymphae.